Reading from the N-terminus, the 444-residue chain is MKHFEANFDGLVGPTHNYAGLSFGNVASFSNAAQTSNPKAAAKQGLQKAKSLADLGMVQGVLAPQERPDLYTLRRIGFSGSDAEVLQKAAQQAPALLNACCSASSMWTANAATVSPSADTRDGKVHFTPANLVDKLHRSIEPVTTGNILQATFNNDRYFKHHQHLPEHASFGDEGAANHTRLCSEYGHAGVELFVYGQTATNPDAPKPTKYPARQTLEASQAVARLHQLEDESCVFMQQNPNVIDQGVFHNDVISVGNKNVLFYHEQAFLDTETKFDEIRRKMNSDMYFVKVTTEQVSIDDAVRSYLFNTQIITLPSGEMAIIAPTNCQENPAVFAYLNELVTLGTPIKQVRYYDVKQSMQNGGGPACLRLRVAMNEQEVAAVNQNTLMDDGLFTRLNTWVDRHYRDQLTVSDLADPQLIIESRTALDELTQILKLGSVYLFQR.

Residues A19–S28, N110, and H137–R138 each bind substrate. E174 is a catalytic residue. R214 lines the substrate pocket. The active site involves H250. Substrate contacts are provided by D252 and N362. C368 serves as the catalytic Nucleophile.

The protein belongs to the succinylarginine dihydrolase family. In terms of assembly, homodimer.

It catalyses the reaction N(2)-succinyl-L-arginine + 2 H2O + 2 H(+) = N(2)-succinyl-L-ornithine + 2 NH4(+) + CO2. It functions in the pathway amino-acid degradation; L-arginine degradation via AST pathway; L-glutamate and succinate from L-arginine: step 2/5. Its function is as follows. Catalyzes the hydrolysis of N(2)-succinylarginine into N(2)-succinylornithine, ammonia and CO(2). In Shewanella frigidimarina (strain NCIMB 400), this protein is N-succinylarginine dihydrolase.